The chain runs to 84 residues: Exodeoxyribonuclease 7 small subunit (84 aa).

Belongs to the XseB family. In terms of assembly, heterooligomer composed of large and small subunits.

Its subcellular location is the cytoplasm. The catalysed reaction is Exonucleolytic cleavage in either 5'- to 3'- or 3'- to 5'-direction to yield nucleoside 5'-phosphates.. Bidirectionally degrades single-stranded DNA into large acid-insoluble oligonucleotides, which are then degraded further into small acid-soluble oligonucleotides. The sequence is that of Exodeoxyribonuclease 7 small subunit from Bartonella henselae (strain ATCC 49882 / DSM 28221 / CCUG 30454 / Houston 1) (Rochalimaea henselae).